A 311-amino-acid polypeptide reads, in one-letter code: 4-diphosphocytidyl-2-C-methyl-D-erythritol kinase (311 aa).

The active site involves K11. 94–104 (PVAAGLAGGSA) serves as a coordination point for ATP. D136 is an active-site residue.

The protein belongs to the GHMP kinase family. IspE subfamily.

The enzyme catalyses 4-CDP-2-C-methyl-D-erythritol + ATP = 4-CDP-2-C-methyl-D-erythritol 2-phosphate + ADP + H(+). It functions in the pathway isoprenoid biosynthesis; isopentenyl diphosphate biosynthesis via DXP pathway; isopentenyl diphosphate from 1-deoxy-D-xylulose 5-phosphate: step 3/6. Functionally, catalyzes the phosphorylation of the position 2 hydroxy group of 4-diphosphocytidyl-2C-methyl-D-erythritol. The protein is 4-diphosphocytidyl-2-C-methyl-D-erythritol kinase of Synechococcus sp. (strain JA-2-3B'a(2-13)) (Cyanobacteria bacterium Yellowstone B-Prime).